We begin with the raw amino-acid sequence, 159 residues long: Ornithine decarboxylase antizyme (159 aa).

This sequence belongs to the ODC antizyme family. In terms of assembly, interacts with ODC1 and thereby sterically blocks ODC homodimerization.

Its function is as follows. Ornithine decarboxylase (ODC) antizyme protein that negatively regulates ODC activity and intracellular polyamine biosynthesis and uptake in response to increased intracellular polyamine levels. Binds to ODC monomers, inhibiting the assembly of the functional ODC homodimer, and targets the monomers for ubiquitin-independent proteolytic destruction by the 26S proteasome. This chain is Ornithine decarboxylase antizyme, found in Caenorhabditis elegans.